The sequence spans 76 residues: Conotoxin ArMKLT2-032 (76 aa).

A signal peptide spans 1-22 (MKLTCVLIIAVLFLTACQLTTG). Residues 23 to 46 (ETYSRGEQKDHALRSTDKNSKLTR) constitute a propeptide that is removed on maturation. A Pyrrolidone carboxylic acid modification is found at Q47. Cystine bridges form between C48–C62, C55–C66, and C61–C73.

This sequence belongs to the conotoxin O1 superfamily. Expressed by the venom duct.

The protein resides in the secreted. The polypeptide is Conotoxin ArMKLT2-032 (Conus arenatus (Sand-dusted cone)).